We begin with the raw amino-acid sequence, 1040 residues long: Exosome RNA helicase MTR4 (1040 aa).

A2 carries the post-translational modification N-acetylalanine. Positions 16 to 77 are disordered; the sequence is DSTSAAGAKK…GTDEPIFGKK (62 aa). The segment covering 23-33 has biased composition (basic and acidic residues); the sequence is AKKDKEKEKWK. Residue K24 forms a Glycyl lysine isopeptide (Lys-Gly) (interchain with G-Cter in SUMO2) linkage. The residue at position 38 (S38) is a Phosphoserine. Basic and acidic residues predominate over residues 41-50; it reads KAGKRLDTKL. N6-acetyllysine occurs at positions 49 and 76. Residues I137, 159-166, S162, G164, K165, and T166 contribute to the ATP site; that span reads AHTSAGKT. The Helicase ATP-binding domain occupies 146–302; the sequence is IQCVDNNQSV…WICHLHKQPC (157 aa). The DEIH box signature appears at 250–253; it reads DEIH. K356 participates in a covalent cross-link: Glycyl lysine isopeptide (Lys-Gly) (interchain with G-Cter in SUMO2). Residues 403-575 enclose the Helicase C-terminal domain; that stretch reads QMTKLDFNTD…NMVLNLLRVE (173 aa). Glycyl lysine isopeptide (Lys-Gly) (interchain with G-Cter in SUMO2) cross-links involve residues K682 and K721.

Belongs to the helicase family. SKI2 subfamily. Component of a TRAMP-like complex, an ATP-dependent exosome regulatory complex consisting of a helicase (MTREX), an oligadenylate polymerase (TENT4B or TENT4A), and a substrate specific RNA-binding factor (ZCCHC7 or ZCCHC8). Several TRAMP-like complexes exist with specific compositions and are associated with nuclear, or nucleolar RNA exosomes. Identified in the spliceosome C complex. Component of the poly(A) tail exosome targeting (PAXT) complex made of PABPN1, ZFC3H1 and MTREX that directs a subset of long and polyadenylated poly(A) RNAs for exosomal degradation. Component of the nuclear exosome targeting (NEXT) complex composed of MTREX, ZCCHC8, and RBM7 that directs a subset of non-coding short-lived RNAs for exosomal degradation. Interacts with ZCCHC8; this interaction bridges the interaction between RBM7 and MTREX. Binds to ZFC3H1 and RBM7 in a RNase-insensitive manner. Interacts with EXOSC10; the interaction mediates the association of MTREX with nuclear RNA exosomes. Interacts with isoform 1 of NVL in an ATP-dependent manner; the interaction is required to associate NVL with nuclear RNA exosome. Interacts with WDR74; the interaction dissociation in a late stage of rRNA synthesis is required for appropriate maturation of pre-60S particles and depends on the ATPase activity of NVL. Interacts with MPHOSPH6. Interacts with the RNA cap-binding complex proteins NCBP1 and SRRT. Interacts with NRDE2; the interaction is direct and negatively regulates MTREX function in exosomal degradation by changing its conformation precluding interaction with ZFC3H1, the RNA cap-binding complex proteins NCBP1 and SRRT, and association with the exosome. Associates with the RNA exosome complex.

The protein resides in the nucleus. It is found in the nucleoplasm. It localises to the nucleolus. The protein localises to the nucleus speckle. It catalyses the reaction ATP + H2O = ADP + phosphate + H(+). Its activity is regulated as follows. Activated when MTREX is incorporated into NEXT complex an the nuclear RNA exosome complex. Catalyzes the ATP-dependent unwinding of RNA duplexes with a single-stranded 3' RNA extension. Central subunit of many protein complexes, namely TRAMP-like, nuclear exosome targeting (NEXT) and poly(A) tail exosome targeting (PAXT). NEXT functions as an RNA exosome cofactor that directs a subset of non-coding short-lived RNAs for exosomal degradation. NEXT is involved in surveillance and turnover of aberrant transcripts and non-coding RNAs. PAXT directs a subset of long and polyadenylated poly(A) RNAs for exosomal degradation. The RNA exosome is fundamental for the degradation of RNA in eukaryotic nuclei. Substrate targeting is facilitated by its cofactor ZCCHC8, which links to RNA-binding protein adapters. Associated with the RNA exosome complex and involved in the 3'-processing of the 7S pre-RNA to the mature 5.8S rRNA. May be involved in pre-mRNA splicing. In the context of NEXT complex can also in vitro unwind DNA:RNA heteroduplexes with a 3' poly (A) RNA tracking strand. Can promote unwinding and degradation of structured RNA substrates when associated with the nuclear exosome and its cofactors. Can displace a DNA strand while translocating on RNA to ultimately degrade the RNA within a DNA/RNA heteroduplex. Plays a role in DNA damage response. This is Exosome RNA helicase MTR4 from Mus musculus (Mouse).